Consider the following 196-residue polypeptide: MKVNPNNIELIISAVKEEQYPETELSEVALSGRSNVGKSTFINSMIGRKNMARTSQQPGKTQTLNFYNIDEQLIFVDVPGYGYAKVSKTQREKFGKMIEEYITKRENLQLVIQLVDLRHDPTQDDILMYNYLKHFDIPTLVICTKEDKIPKGKVQKHIKNIKTQLDMDPDDTIVSYSSIQNNKQQQIWNLIEPYIS.

The EngB-type G domain occupies 24 to 196; it reads ELSEVALSGR…IWNLIEPYIS (173 aa). Residues 32 to 39, 59 to 63, 77 to 80, 144 to 147, and 176 to 178 each bind GTP; these read GRSNVGKS, GKTQT, DVPG, TKED, and YSS. Mg(2+) is bound by residues S39 and T61.

It belongs to the TRAFAC class TrmE-Era-EngA-EngB-Septin-like GTPase superfamily. EngB GTPase family. Mg(2+) is required as a cofactor.

Functionally, necessary for normal cell division and for the maintenance of normal septation. This chain is Probable GTP-binding protein EngB, found in Staphylococcus aureus (strain Mu3 / ATCC 700698).